A 91-amino-acid polypeptide reads, in one-letter code: Potassium channel toxin MeuTXK-beta-2 (91 aa).

The N-terminal stretch at 1–19 (MQRNLVVLLFLGMVALSSC) is a signal peptide. One can recognise a BetaSPN-type CS-alpha/beta domain in the interval 54–91 (QFGCSAYQGYCDDHCQDIEKKEGFCHGFKCKCGIPMGF). Disulfide bonds link C57/C78, C64/C83, and C68/C85.

It belongs to the long chain scorpion toxin family. Class 1 subfamily. In terms of tissue distribution, expressed by the venom gland.

The protein resides in the secreted. Has a low affinity binding to potassium channels of rat brain synaptosomes. Displays weak antibacterial activity against Stenotrophomonas sp. Strongly inhibits the development of the Plasmodium berghei ookinetes. Displays slight hemolytic effect on mouse erythrocytes. Induces cytolysis on Xenopus oocytes at high concentrations. Is not toxic towards mice and towards the insect Tenebrio molitor. In Mesobuthus eupeus (Lesser Asian scorpion), this protein is Potassium channel toxin MeuTXK-beta-2.